A 198-amino-acid chain; its full sequence is Superoxide dismutase [Fe] (198 aa).

Fe cation contacts are provided by His27, His74, Asp158, and His162.

This sequence belongs to the iron/manganese superoxide dismutase family. In terms of assembly, homodimer. Fe cation is required as a cofactor.

It localises to the cytoplasm. The catalysed reaction is 2 superoxide + 2 H(+) = H2O2 + O2. In terms of biological role, destroys superoxide anion radicals which are normally produced within the cells and which are toxic to biological systems. The chain is Superoxide dismutase [Fe] (SODB) from Plasmodium falciparum (isolate HB3).